The following is a 158-amino-acid chain: Large ribosomal subunit protein uL11 (158 aa).

Belongs to the universal ribosomal protein uL11 family. Part of the ribosomal stalk of the 50S ribosomal subunit. Interacts with L10 and the large rRNA to form the base of the stalk. L10 forms an elongated spine to which L12 dimers bind in a sequential fashion forming a multimeric L10(L12)X complex.

In terms of biological role, forms part of the ribosomal stalk which helps the ribosome interact with GTP-bound translation factors. The protein is Large ribosomal subunit protein uL11 of Methanoculleus marisnigri (strain ATCC 35101 / DSM 1498 / JR1).